A 262-amino-acid chain; its full sequence is Apolipoprotein A-I (262 aa).

The N-terminal stretch at 1–18 is a signal peptide; sequence MKAVVLTLAVLFLTGSQA. A run of 2 repeats spans residues 67 to 88 and 89 to 110. The segment at 67–262 is 10 X approximate tandem repeats; sequence LKLLDNWDTL…DEASKKLNAQ (196 aa). Residue Met109 is modified to Methionine sulfoxide. A 3; half-length repeat occupies 111 to 121; sequence KDLEEVKQKVQ. 5 repeat units span residues 122 to 142, 144 to 165, 166 to 184, 185 to 206, and 207 to 227. A 9; half-length repeat occupies 228–238; sequence PALEDLRQGLM. At Met238 the chain carries Methionine sulfoxide. Residues 239–262 form repeat 10; that stretch reads PVLESLKVSILAAIDEASKKLNAQ.

It belongs to the apolipoprotein A1/A4/E family. In terms of assembly, homodimer. Interacts with APOA1BP and CLU. Component of a sperm activating protein complex (SPAP), consisting of APOA1, an immunoglobulin heavy chain, an immunoglobulin light chain and albumin. Interacts with NDRG1. Interacts with SCGB3A2. Interacts with NAXE and YJEFN3. Post-translationally, glycosylated. Palmitoylated. In terms of processing, phosphorylation sites are present in the extracellular medium. In terms of tissue distribution, major protein of plasma HDL, also found in chylomicrons.

The protein localises to the secreted. Its function is as follows. Participates in the reverse transport of cholesterol from tissues to the liver for excretion by promoting cholesterol efflux from tissues and by acting as a cofactor for the lecithin cholesterol acyltransferase (LCAT). As part of the SPAP complex, activates spermatozoa motility. The protein is Apolipoprotein A-I (APOA1) of Pantholops hodgsonii (Chiru).